We begin with the raw amino-acid sequence, 97 residues long: UPF0235 protein Aasi_0294 (97 aa).

The protein belongs to the UPF0235 family.

The sequence is that of UPF0235 protein Aasi_0294 from Amoebophilus asiaticus (strain 5a2).